We begin with the raw amino-acid sequence, 131 residues long: Large ribosomal subunit protein bL17 (131 aa).

It belongs to the bacterial ribosomal protein bL17 family. In terms of assembly, part of the 50S ribosomal subunit. Contacts protein L32.

The chain is Large ribosomal subunit protein bL17 from Shewanella oneidensis (strain ATCC 700550 / JCM 31522 / CIP 106686 / LMG 19005 / NCIMB 14063 / MR-1).